We begin with the raw amino-acid sequence, 346 residues long: Upstream stimulatory factor 2 (346 aa).

Disordered regions lie at residues 1–44 (MDML…PGAE) and 215–244 (APRT…NEVE). Low complexity predominate over residues 11-20 (AASATAAAAA). Basic and acidic residues predominate over residues 226–244 (DGTRTPRDERRRAQHNEVE). The region spanning 235 to 290 (RRRAQHNEVERRRRDKINNWIVQLSKIIPDCNADNSKTGASKGGILSKACDYIREL) is the bHLH domain. Positions 307–328 (LQMDNELLRQQIEELKNENALL) are leucine-zipper.

Interacts with MAF. Efficient DNA binding requires dimerization with another bHLH protein. Binds DNA as a homodimer or a heterodimer (USF1/USF2). In vivo, the USF1/USF2A heterodimer represents over 66% of the usf binding activity whereas the USF1 and USF2A homodimers represent less than 10%. The USF1/USF2B heterodimer accounted for almost 15% in some cell. In terms of tissue distribution, ubiquitous.

The protein localises to the nucleus. Its function is as follows. Transcription factor that binds to a symmetrical DNA sequence (E-boxes) (5'-CACGTG-3') that is found in a variety of viral and cellular promoters. This Homo sapiens (Human) protein is Upstream stimulatory factor 2 (USF2).